The chain runs to 469 residues: Arginine biosynthesis bifunctional protein ArgJ, chloroplastic (469 aa).

Substrate is bound by residues Thr-213, Lys-239, Thr-250, Glu-337, Asn-464, and Thr-469. The active-site Nucleophile is the Thr-250.

Belongs to the ArgJ family. Heterodimer of an alpha and a beta chain.

It is found in the plastid. The protein localises to the chloroplast. It catalyses the reaction N(2)-acetyl-L-ornithine + L-glutamate = N-acetyl-L-glutamate + L-ornithine. It carries out the reaction L-glutamate + acetyl-CoA = N-acetyl-L-glutamate + CoA + H(+). It participates in amino-acid biosynthesis; L-arginine biosynthesis; L-ornithine and N-acetyl-L-glutamate from L-glutamate and N(2)-acetyl-L-ornithine (cyclic): step 1/1. It functions in the pathway amino-acid biosynthesis; L-arginine biosynthesis; N(2)-acetyl-L-ornithine from L-glutamate: step 1/4. Functionally, catalyzes two activities which are involved in the cyclic version of arginine biosynthesis: the synthesis of acetylglutamate from glutamate and acetyl-CoA, and of ornithine by transacetylation between acetylornithine and glutamate. This Ricinus communis (Castor bean) protein is Arginine biosynthesis bifunctional protein ArgJ, chloroplastic.